Here is a 252-residue protein sequence, read N- to C-terminus: Chlorophyll a-b binding protein P4, chloroplastic (252 aa).

Trp56 serves as a coordination point for chlorophyll b. Phe76 and Glu95 together coordinate chlorophyll a. Arg100 is a chlorophyll b binding site. A run of 2 helical transmembrane segments spans residues 101–121 and 134–154; these read WAML…IGII and YFAS…YVEI. 4 residues coordinate chlorophyll b: Ser137, Val143, Glu153, and Arg156. Residues Lys203, Glu204, Asn207, Arg209, Gln221, and His236 each contribute to the chlorophyll a site.

This sequence belongs to the light-harvesting chlorophyll a/b-binding (LHC) protein family. In terms of assembly, the LHC complex consists of chlorophyll a-b binding proteins. The cofactor is Binds at least 14 chlorophylls (8 Chl-a and 6 Chl-b) and carotenoids such as lutein and neoxanthin.. Photoregulated by reversible phosphorylation of its threonine residues.

The protein resides in the plastid. It localises to the chloroplast thylakoid membrane. In terms of biological role, the light-harvesting complex (LHC) functions as a light receptor, it captures and delivers excitation energy to photosystems with which it is closely associated. Its function is as follows. May channel protons produced in the catalytic Mn center of water oxidation into the thylakoid lumen. The polypeptide is Chlorophyll a-b binding protein P4, chloroplastic (Pisum sativum (Garden pea)).